Reading from the N-terminus, the 218-residue chain is Ribose-5-phosphate isomerase A (218 aa).

Substrate contacts are provided by residues 28–31 (SGST), 81–84 (DGAD), and 94–97 (KGGG). Residue glutamate 103 is the Proton acceptor of the active site. Lysine 121 serves as a coordination point for substrate.

The protein belongs to the ribose 5-phosphate isomerase family. Homodimer.

The enzyme catalyses aldehydo-D-ribose 5-phosphate = D-ribulose 5-phosphate. It participates in carbohydrate degradation; pentose phosphate pathway; D-ribose 5-phosphate from D-ribulose 5-phosphate (non-oxidative stage): step 1/1. Catalyzes the reversible conversion of ribose-5-phosphate to ribulose 5-phosphate. This is Ribose-5-phosphate isomerase A from Dichelobacter nodosus (strain VCS1703A).